A 447-amino-acid polypeptide reads, in one-letter code: Elongation factor 1-alpha (447 aa).

The region spanning 5–230 is the tr-type G domain; it reads KVHINIVVIG…DNINEPKRPS (226 aa). Residues 14–21 are G1; sequence GHVDSGKS. 14–21 is a GTP binding site; the sequence is GHVDSGKS. Residue K55 is modified to N6,N6-dimethyllysine. A G2 region spans residues 70–74; the sequence is GITID. The residue at position 79 (K79) is an N6,N6,N6-trimethyllysine. The tract at residues 91–94 is G3; that stretch reads DAPG. GTP contacts are provided by residues 91 to 95 and 153 to 156; these read DAPGH and NKMD. The G4 stretch occupies residues 153–156; the sequence is NKMD. K187 carries the N6,N6,N6-trimethyllysine modification. A G5 region spans residues 194 to 196; sequence SGF. K261 bears the N6-methyllysine mark. E289 carries the 5-glutamyl glycerylphosphorylethanolamine modification. N6,N6,N6-trimethyllysine is present on K306. 5-glutamyl glycerylphosphorylethanolamine is present on E362. K396 is subject to N6,N6,N6-trimethyllysine.

It belongs to the TRAFAC class translation factor GTPase superfamily. Classic translation factor GTPase family. EF-Tu/EF-1A subfamily.

The protein resides in the cytoplasm. This protein promotes the GTP-dependent binding of aminoacyl-tRNA to the A-site of ribosomes during protein biosynthesis. The chain is Elongation factor 1-alpha from Vicia faba (Broad bean).